A 103-amino-acid chain; its full sequence is MSGRGKGGKGLGKGGAKRHRKVLRDNIQGITKPAIRRLARRGGVKRISGLIYEETRGVLKVFLENVIRDAVTYCEHAKRKTVTSMDVVYALKRQGRTLYGFGG.

The segment covering 1 to 14 has biased composition (gly residues); the sequence is MSGRGKGGKGLGKG. A disordered region spans residues 1–20; it reads MSGRGKGGKGLGKGGAKRHR. At serine 2 the chain carries N-acetylserine. 2 positions are modified to N6-acetyl-N6-methyllysine; alternate: lysine 6 and lysine 13. A DNA-binding region spans residues 17-21; the sequence is KRHRK. Lysine 21 is modified (N6-methyllysine).

It belongs to the histone H4 family. In terms of assembly, the nucleosome is a histone octamer containing two molecules each of H2A, H2B, H3 and H4 assembled in one H3-H4 heterotetramer and two H2A-H2B heterodimers. The octamer wraps approximately 147 bp of DNA.

The protein resides in the nucleus. Its subcellular location is the chromosome. Core component of nucleosome. Nucleosomes wrap and compact DNA into chromatin, limiting DNA accessibility to the cellular machineries which require DNA as a template. Histones thereby play a central role in transcription regulation, DNA repair, DNA replication and chromosomal stability. DNA accessibility is regulated via a complex set of post-translational modifications of histones, also called histone code, and nucleosome remodeling. In Solaster stimpsoni (Striped sun sea star), this protein is Histone H4.